The chain runs to 198 residues: Carnitine operon protein CaiE (198 aa).

The disordered stretch occupies residues 174 to 198 (KPLTQAEENRPRLKGTTDVKPKSAQ). Over residues 180–198 (EENRPRLKGTTDVKPKSAQ) the composition is skewed to basic and acidic residues.

This sequence belongs to the transferase hexapeptide repeat family.

It functions in the pathway amine and polyamine metabolism; carnitine metabolism. In terms of biological role, overproduction of CaiE stimulates the activity of CaiB and CaiD. In Salmonella typhimurium (strain LT2 / SGSC1412 / ATCC 700720), this protein is Carnitine operon protein CaiE.